A 445-amino-acid chain; its full sequence is Nuclear hormone receptor family member nhr-1 (445 aa).

The tract at residues 19–55 is disordered; it reads PMVNSQRNEDPSMYMNGSAASVSHTNGSSSMGNDQKF. Residues 36–51 show a composition bias toward polar residues; the sequence is SAASVSHTNGSSSMGN. Residues 70–145 constitute a DNA-binding region (nuclear receptor); the sequence is GELCAVCSDL…VGMDAKALQI (76 aa). 2 consecutive NR C4-type zinc fingers follow at residues 73–93 and 109–133; these read CAVC…CNGC and CQYN…FNKC. The region spanning 179–444 is the NR LBD domain; sequence QDQEIIDQLT…PFVKELCMKR (266 aa).

It belongs to the nuclear hormone receptor family.

The protein localises to the nucleus. In terms of biological role, orphan nuclear receptor which acts in concert with the insulin/IGF-1-like signaling (IIS) pathway during osmotic stress, perhaps in response to a ligand modified by the sulfotransferase ssu-1. This is Nuclear hormone receptor family member nhr-1 (nhr-1) from Caenorhabditis elegans.